An 860-amino-acid polypeptide reads, in one-letter code: Leucine--tRNA ligase (860 aa).

A 'HIGH' region motif is present at residues 42–52 (PYPSGRLHMGH). A 'KMSKS' region motif is present at residues 619-623 (KMSKS). Residue Lys-622 coordinates ATP.

It belongs to the class-I aminoacyl-tRNA synthetase family.

The protein resides in the cytoplasm. The enzyme catalyses tRNA(Leu) + L-leucine + ATP = L-leucyl-tRNA(Leu) + AMP + diphosphate. The polypeptide is Leucine--tRNA ligase (Escherichia coli O7:K1 (strain IAI39 / ExPEC)).